A 159-amino-acid chain; its full sequence is Capsid protein (159 aa).

Serine 2 bears the N-acetylserine; by host mark.

It belongs to the virgaviridae capsid protein family.

Its subcellular location is the virion. In terms of biological role, capsid protein self-assembles to form rod-shaped virions about 18 nm in diameter with a central canal enclosing the viral genomic RNA. In Tobacco mosaic virus (strain Rakkyo) (TMV-R), this protein is Capsid protein (CP).